The following is a 64-amino-acid chain: Temporin-ALe (64 aa).

The first 22 residues, M1–C22, serve as a signal peptide directing secretion. The propeptide occupies E23–F47. L62 carries the leucine amide modification.

In terms of tissue distribution, expressed by the skin glands.

It localises to the secreted. Antimicrobial peptide with activity against Gram-positive and Gram-negative bacteria and against fungi. Has been tested against S.aureus (MIC=1.25 ug/mL), B.pumilus (MIC=5.0 ug/mL), B.cereus (MIC=15.0 ug/mL), E.coli (MIC=1.25 ug/mL), B.dysenteriae (MIC=5.0 ug/mL), A.cacoaceticus (MIC=15.0 ug/mL), P.aeruginosa (MIC=5.0 ug/mL) and C.albicans (MIC=1.25 ug/mL). Also shows a weak hemolytic activity. The polypeptide is Temporin-ALe (Amolops loloensis (Lolokou Sucker Frog)).